The primary structure comprises 309 residues: Partitioning defective protein 6 (309 aa).

Residues 14-96 form the PB1 domain; sequence TLQVKSKFDS…PLLRLLIQRR (83 aa). One can recognise a Pseudo-CRIB domain in the interval 132-149; the sequence is ISNPEDFRQVSAIIDVDI. Residues 156–249 form the PDZ domain; it reads RVRLCKHGQE…NLIITVKPAN (94 aa). Positions 249–270 are enriched in polar residues; sequence NQRNTLSRGPSQQGTPNASEMS. The tract at residues 249–309 is disordered; the sequence is NQRNTLSRGP…DANDSDSGED (61 aa).

It belongs to the PAR6 family. In terms of assembly, interacts with par-3, required for its peripheral localization, and with cdc-42, required for the activation of a par-3/par-6/pkc-3 complex. As to expression, colocalized with par-3 at all stages in early embryos, at the anterior cortex of the embryo. Patchy expression observed at the periphery after completion of meiosis I and in meiosis II, which on completion of metaphase II, is restricted to the anterior 85% of embryo length; this decreases to 55% in embryos between prophase and telophase of the first mitosis. During the first cleavage, expression is detected in the advancing furrow. Along with pkc-3, is unable to associate with the apical cortex of cells that lack par-3. Transiently coexpressed and colocalized with par-3 and pkc-3, asymmetrically in the developing somatic gonad, including the spermathecal precursor cells of L4 larvae.

The protein resides in the cytoplasm. The protein localises to the cell membrane. Its subcellular location is the cell junction. It is found in the tight junction. Functionally, necessary for apicobasal and anterior-posterior asymmetries associated with cell adhesion and gastrulation during the first few cell cycles of embryogenesis. Required for localizing/ maintaining par-3 at the cell periphery. Regulates mes-1 expression and/or localization pattern during early embryogenesis. Acts together with par-3 and pkc-3 in maintaining epithelial cell polarity in the distal spermatheca. Plays a role in endosome and Golgi body positioning. This Caenorhabditis elegans protein is Partitioning defective protein 6.